The primary structure comprises 261 residues: tRNA threonylcarbamoyladenosine dehydratase (261 aa).

A helical transmembrane segment spans residues 230–250 (CANGFGAATMITATFGFFAVS).

It belongs to the HesA/MoeB/ThiF family.

It is found in the membrane. Its function is as follows. Catalyzes the ATP-dependent dehydration of threonylcarbamoyladenosine at position 37 (t(6)A37) to form cyclic t(6)A37 (ct(6)A37) in tRNAs that read codons beginning with adenine. The sequence is that of tRNA threonylcarbamoyladenosine dehydratase (tcdA) from Haemophilus influenzae (strain ATCC 51907 / DSM 11121 / KW20 / Rd).